A 54-amino-acid polypeptide reads, in one-letter code: Ovomucoid (54 aa).

The Kazal-like domain maps to 4–54; that stretch reads VDCSEYPKPACTMEHRPLCGSDNQTYDNKCNFCNAVVESNGTLTLSHFGKC. Disulfide bonds link Cys-6-Cys-36, Cys-14-Cys-33, and Cys-22-Cys-54. Residue Asn-43 is glycosylated (N-linked (GlcNAc...) asparagine).

It is found in the secreted. The polypeptide is Ovomucoid (Guttera pucherani (Eastern crested guineafowl)).